The following is a 433-amino-acid chain: ATP-dependent protease ATPase subunit HslU (433 aa).

ATP contacts are provided by residues valine 18, 60–65 (GVGKTE), aspartate 246, glutamate 311, and arginine 383.

This sequence belongs to the ClpX chaperone family. HslU subfamily. As to quaternary structure, a double ring-shaped homohexamer of HslV is capped on each side by a ring-shaped HslU homohexamer. The assembly of the HslU/HslV complex is dependent on binding of ATP.

Its subcellular location is the cytoplasm. ATPase subunit of a proteasome-like degradation complex; this subunit has chaperone activity. The binding of ATP and its subsequent hydrolysis by HslU are essential for unfolding of protein substrates subsequently hydrolyzed by HslV. HslU recognizes the N-terminal part of its protein substrates and unfolds these before they are guided to HslV for hydrolysis. This Rhodopseudomonas palustris (strain HaA2) protein is ATP-dependent protease ATPase subunit HslU.